Reading from the N-terminus, the 264-residue chain is Endochitinase At2g43590 (264 aa).

The N-terminal stretch at 1 to 24 (MAFTKISLVLLLCLLGFFSETVKS) is a signal peptide. The region spanning 25–59 (QNCGCAPNLCCSQFGYCGTDDAYCGVGCRSGPCRG) is the Chitin-binding type-1 domain. 4 cysteine pairs are disulfide-bonded: Cys27/Cys35, Cys29/Cys41, Cys34/Cys48, and Cys52/Cys57. Residues 66–264 (GSVGSIVTQG…GVDPGPNLSC (199 aa)) form a catalytic region. Glu128 acts as the Proton donor in catalysis. N-linked (GlcNAc...) asparagine glycosylation occurs at Asn261.

This sequence belongs to the glycosyl hydrolase 19 family. Chitinase class I subfamily.

It catalyses the reaction Random endo-hydrolysis of N-acetyl-beta-D-glucosaminide (1-&gt;4)-beta-linkages in chitin and chitodextrins.. The chain is Endochitinase At2g43590 from Arabidopsis thaliana (Mouse-ear cress).